We begin with the raw amino-acid sequence, 557 residues long: Potassium-transporting ATPase potassium-binding subunit (557 aa).

The next 12 membrane-spanning stretches (helical) occupy residues 5-25 (GFLL…PLGS), 63-83 (LCAI…MLLG), 132-152 (GLTV…FALI), 170-190 (LLRI…LFFI), 253-273 (FVQM…FGEV), 283-303 (LLWA…WAEV), 329-349 (VLVS…AVIA), 356-376 (ALGG…FGGV), 379-399 (GLYG…LMIG), 416-436 (LTAL…ALAM), 484-504 (LLAF…MAIA), and 526-546 (LFVG…FIPA).

This sequence belongs to the KdpA family. In terms of assembly, the system is composed of three essential subunits: KdpA, KdpB and KdpC.

It is found in the cell inner membrane. Part of the high-affinity ATP-driven potassium transport (or Kdp) system, which catalyzes the hydrolysis of ATP coupled with the electrogenic transport of potassium into the cytoplasm. This subunit binds the periplasmic potassium ions and delivers the ions to the membrane domain of KdpB through an intramembrane tunnel. In Escherichia coli O157:H7, this protein is Potassium-transporting ATPase potassium-binding subunit.